The sequence spans 259 residues: Phosphate import ATP-binding protein PstB 1 (259 aa).

The 242-residue stretch at 13 to 254 (IQVRGLEFFY…PSKTQTEDYI (242 aa)) folds into the ABC transporter domain. 45–52 (GPSGCGKS) provides a ligand contact to ATP.

The protein belongs to the ABC transporter superfamily. Phosphate importer (TC 3.A.1.7) family. The complex is composed of two ATP-binding proteins (PstB), two transmembrane proteins (PstC and PstA) and a solute-binding protein (PstS).

The protein resides in the cell inner membrane. The catalysed reaction is phosphate(out) + ATP + H2O = ADP + 2 phosphate(in) + H(+). Functionally, part of the ABC transporter complex PstSACB involved in phosphate import. Responsible for energy coupling to the transport system. The chain is Phosphate import ATP-binding protein PstB 1 from Pseudomonas savastanoi pv. phaseolicola (strain 1448A / Race 6) (Pseudomonas syringae pv. phaseolicola (strain 1448A / Race 6)).